The sequence spans 365 residues: BTB/POZ and TAZ domain-containing protein 1 (365 aa).

A BTB domain is found at 25–96 (TDVEIITSGR…LYSPSVTENE (72 aa)). A Nuclear localization signal motif is present at residues 193 to 202 (RKKRRRRHRR). The segment at 205 to 304 (NLYLQLSEAM…SESCRVPLCR (100 aa)) adopts a TAZ-type zinc-finger fold. Residues 315 to 338 (KMVEDTKWKVLVRRVASAKAMSSL) are caM-binding.

In terms of assembly, interacts with CUL3A. Interacts with GTE9/BET9 and GTE11/BET10 through the BTB domain. Preferentially expressed in young leaves, roots and stems.

The protein resides in the nucleus. The protein localises to the cytoplasm. It functions in the pathway protein modification; protein ubiquitination. Its function is as follows. May act as a substrate-specific adapter of an E3 ubiquitin-protein ligase complex (CUL3-RBX1-BTB) which mediates the ubiquitination and subsequent proteasomal degradation of target proteins. Also targeted for degradation by the 26S proteasome pathway. May be involved in gametophyte development. This chain is BTB/POZ and TAZ domain-containing protein 1 (BT1), found in Arabidopsis thaliana (Mouse-ear cress).